Consider the following 210-residue polypeptide: MVACVIKDWQGSEVGETALELRVAKAENAAHIVHRALRRQMANARQGTASTKTRAEVRGGGRKPWRQKGTGRARAGSNRSPLWRGGGVIFGPKPRDYSIKMNYKERRLALRTALISRSDSLIVVEDFSDKLPRPKTKELAAAIARWGVQPNDKVLLIVADKQDTIYLSARNIATVKLIQATSLNVFDLLNADWIVATVEALGKIQEVYGG.

The disordered stretch occupies residues 41–79 (MANARQGTASTKTRAEVRGGGRKPWRQKGTGRARAGSNR). The segment covering 43–52 (NARQGTASTK) has biased composition (polar residues). The span at 60–71 (GGRKPWRQKGTG) shows a compositional bias: basic residues.

Belongs to the universal ribosomal protein uL4 family. In terms of assembly, part of the 50S ribosomal subunit.

Functionally, one of the primary rRNA binding proteins, this protein initially binds near the 5'-end of the 23S rRNA. It is important during the early stages of 50S assembly. It makes multiple contacts with different domains of the 23S rRNA in the assembled 50S subunit and ribosome. Forms part of the polypeptide exit tunnel. The protein is Large ribosomal subunit protein uL4 of Cyanothece sp. (strain PCC 7425 / ATCC 29141).